The sequence spans 441 residues: MITSPVFSGQFYAVLGLARSGMATVAALLASDAKVMAWDNNPETRDRLQQQYQEAIDKGRLVISDPMIADIFGISAFVVSPGIPINRHPIAALAKERGIPIIGDIELFAQAHGFWERHGRRCPVVGITGTNGKSTTTALIHHILKEAGLPTLMGGNIGLPLLAADPLPDGGVYVLELSSYQIDLTFTLDCDIAVLTNITPDHLDRHGGFEGYRKAKERLFLLQSSPHYAVIATDDIPSQVIAKQSAAHLVTVHADNISAEDQVNWPNLQGPHNAQNAVLAMAVAHILGISDDVISKALISYAGLPHRMQKIGERRGVLFIDDSKATNAMATAPALAAFPAIHWILGGVPKTADLDPCKAFYNHIRQAYTIGQAGPDYAQLLREAGVNVVECGTLEKAVRLAAEEAQPDEVVMLTPACASFDQFSDYEARGQAFKKIVEALD.

129 to 135 contacts ATP; that stretch reads GTNGKST.

It belongs to the MurCDEF family.

The protein resides in the cytoplasm. The enzyme catalyses UDP-N-acetyl-alpha-D-muramoyl-L-alanine + D-glutamate + ATP = UDP-N-acetyl-alpha-D-muramoyl-L-alanyl-D-glutamate + ADP + phosphate + H(+). Its pathway is cell wall biogenesis; peptidoglycan biosynthesis. Its function is as follows. Cell wall formation. Catalyzes the addition of glutamate to the nucleotide precursor UDP-N-acetylmuramoyl-L-alanine (UMA). The sequence is that of UDP-N-acetylmuramoylalanine--D-glutamate ligase from Zymomonas mobilis subsp. mobilis (strain ATCC 31821 / ZM4 / CP4).